A 274-amino-acid chain; its full sequence is Diaminopimelate epimerase (274 aa).

Positions 11, 44, and 64 each coordinate substrate. Catalysis depends on cysteine 73, which acts as the Proton donor. Substrate contacts are provided by residues glycine 74–asparagine 75, asparagine 157, asparagine 190, and glutamate 208–arginine 209. Catalysis depends on cysteine 217, which acts as the Proton acceptor. Glycine 218–serine 219 lines the substrate pocket.

It belongs to the diaminopimelate epimerase family. In terms of assembly, homodimer.

The protein localises to the cytoplasm. The enzyme catalyses (2S,6S)-2,6-diaminopimelate = meso-2,6-diaminopimelate. The protein operates within amino-acid biosynthesis; L-lysine biosynthesis via DAP pathway; DL-2,6-diaminopimelate from LL-2,6-diaminopimelate: step 1/1. Its function is as follows. Catalyzes the stereoinversion of LL-2,6-diaminopimelate (L,L-DAP) to meso-diaminopimelate (meso-DAP), a precursor of L-lysine and an essential component of the bacterial peptidoglycan. The chain is Diaminopimelate epimerase from Escherichia coli O6:H1 (strain CFT073 / ATCC 700928 / UPEC).